Reading from the N-terminus, the 106-residue chain is SDO1-like protein C21C3.19 (106 aa).

Belongs to the SDO1-like family.

The protein resides in the cytoplasm. It is found in the nucleus. Functionally, may play a role in RNA metabolism. The sequence is that of SDO1-like protein C21C3.19 from Schizosaccharomyces pombe (strain 972 / ATCC 24843) (Fission yeast).